Here is a 56-residue protein sequence, read N- to C-terminus: Small ribosomal subunit protein uS14 (56 aa).

Serine 9 is subject to Phosphoserine. An Omega-N-methylarginine modification is found at arginine 12. The Zn(2+) site is built by cysteine 21, cysteine 24, cysteine 39, and cysteine 42. Lysine 48 carries the post-translational modification N6-acetyllysine.

Belongs to the universal ribosomal protein uS14 family. Component of the 40S small ribosomal subunit. It depends on Zn(2+) as a cofactor.

The protein localises to the cytoplasm. The protein resides in the cytosol. Its subcellular location is the rough endoplasmic reticulum. Its function is as follows. Component of the small ribosomal subunit. The ribosome is a large ribonucleoprotein complex responsible for the synthesis of proteins in the cell. The chain is Small ribosomal subunit protein uS14 (RPS29) from Sus scrofa (Pig).